Consider the following 488-residue polypeptide: MLSLATLDLLLSISESELIEEMVVGLLASPQLAIFFEKFPRIKRALMKDIPGWKQNLQQRIREAKVPAGLANEFALYQQSQLEDSPLFYAHLPQIVVQLQQWHSPFATQAKTLLHTADLERNPQTGDSFQTLFLQRWRVSLTLQTITIHHQLLEQEREQLLAELQQRLALSGALEPILATNDGAAGRLWDMSQGHLQRGDYQLLLQYGDFLQQQPELQQLAEQLGRSRSAKAQPTPDARFEPYTVMVRQPDTVPEEVSGIHQSNDILRLLPTELVMLGMSELEFEFYRRLLERRLLTYRLQGDNWQEKTLQRPISLKSHDEQPRGPFIVCVDTSGSMGGFSEQCAKAFCLALLRIALEDNRRCYIMLFATEIIHYELSSASGIEQAIRFLSQHFRGGTDLAACLSSTLSKMEERDWYDADAVIISDFIAQRLPEELIRKIKIQQQAHQHRFHAVAMSAYGKPGIMRIFDHIWRFDTGLKSRLIRRWKR.

The protein belongs to the ViaA family. As to quaternary structure, homodimer. Interacts with RavA.

The protein resides in the cytoplasm. Its function is as follows. Component of the RavA-ViaA chaperone complex, which may act on the membrane to optimize the function of some of the respiratory chains. ViaA stimulates the ATPase activity of RavA. The polypeptide is Regulatory protein ViaA (Yersinia enterocolitica serotype O:8 / biotype 1B (strain NCTC 13174 / 8081)).